A 100-amino-acid chain; its full sequence is uncharacterized protein (100 aa).

It to M.jannaschii MJ1155.1.

This is an uncharacterized protein from Archaeoglobus fulgidus (strain ATCC 49558 / DSM 4304 / JCM 9628 / NBRC 100126 / VC-16).